The chain runs to 358 residues: Feruloyl CoA ortho-hydroxylase F6H1-3 (358 aa).

The Fe2OG dioxygenase domain occupies 200–308 (TKESLLMGSK…RISVPIFVNP (109 aa)). Position 216 (Y216) interacts with 2-oxoglutarate. Residues H231, D233, and H289 each contribute to the Fe cation site. 2-oxoglutarate-binding residues include R299 and S301.

This sequence belongs to the iron/ascorbate-dependent oxidoreductase family. It depends on L-ascorbate as a cofactor. Requires Fe(2+) as cofactor. Mostly expressed in tubers, and, at low levels, in underground stems, stems, leaves and petioles.

The enzyme catalyses (E)-feruloyl-CoA + 2-oxoglutarate + O2 = (E)-6-hydroxyferuloyl-CoA + succinate + CO2. Its pathway is phenylpropanoid metabolism. Functionally, 2-oxoglutarate (OG)- and Fe(II)-dependent dioxygenase (2OGD) involved in scopoletin biosynthesis. Converts feruloyl CoA into 6'-hydroxyferuloyl CoA, and, at low efficiency, caffeoyl-CoA into 6'-hydroxycaffeate, but has no activity with p-coumaroyl-CoA. The sequence is that of Feruloyl CoA ortho-hydroxylase F6H1-3 from Ipomoea batatas (Sweet potato).